The following is a 279-amino-acid chain: Phosphate-binding protein PstS (279 aa).

An N-terminal signal peptide occupies residues 1 to 18 (MKKVIILIFMLSTSLLYN). Residue Cys-19 is the site of N-palmitoyl cysteine attachment. A lipid anchor (S-diacylglycerol cysteine) is attached at Cys-19. Residues 33–35 (STT), Ser-63, and 151–153 (SGS) contribute to the phosphate site.

The protein belongs to the PstS family. Monomer (in vitro). The complex is composed of two ATP-binding proteins (PstB), two transmembrane proteins (PstC and PstA) and a solute-binding protein (PstS).

It is found in the cell membrane. In terms of biological role, binds inorganic phosphate with a Kd of 1.2 uM. Part of the ABC transporter complex PstSACB involved in phosphate import. The sequence is that of Phosphate-binding protein PstS from Borreliella burgdorferi (strain ATCC 35210 / DSM 4680 / CIP 102532 / B31) (Borrelia burgdorferi).